Reading from the N-terminus, the 733-residue chain is Polyribonucleotide nucleotidyltransferase (733 aa).

The disordered stretch occupies residues 404–424; that stretch reads NYNMPPYSTGETGRVGSPKRR. Mg(2+) contacts are provided by Asp516 and Asp522. Residues 582-641 form the KH domain; it reads PRIITVHIPVDKIGEVIGPKGKMINQIQDDTGANISIEDDGTIFIGADNGDSAESARSMI. The 73-residue stretch at 653 to 725 folds into the S1 motif domain; that stretch reads GERYLGTVVK…DRGKLSLVLA (73 aa).

This sequence belongs to the polyribonucleotide nucleotidyltransferase family. Mg(2+) serves as cofactor.

The protein resides in the cytoplasm. It catalyses the reaction RNA(n+1) + phosphate = RNA(n) + a ribonucleoside 5'-diphosphate. In terms of biological role, involved in mRNA degradation. Catalyzes the phosphorolysis of single-stranded polyribonucleotides processively in the 3'- to 5'-direction. This Cutibacterium acnes (strain DSM 16379 / KPA171202) (Propionibacterium acnes) protein is Polyribonucleotide nucleotidyltransferase.